Here is a 316-residue protein sequence, read N- to C-terminus: Insulin-like growth factor-binding protein 2 (316 aa).

Residues 1–29 form the signal peptide; that stretch reads MLPRLGGTALSLLPLLLLLLGTGGRGARA. In terms of domain architecture, IGFBP N-terminal spans 31–126; sequence VLFRCPPCTP…VLGEGTCEKR (96 aa). 6 cysteine pairs are disulfide-bonded: cysteine 35-cysteine 76, cysteine 38-cysteine 78, cysteine 46-cysteine 79, cysteine 68-cysteine 82, cysteine 90-cysteine 103, and cysteine 97-cysteine 123. The tract at residues 189 to 217 is disordered; that stretch reads QHRQMGKGGKHHLGLEEPKKLRPPPARTP. The Thyroglobulin type-1 domain maps to 215–297; that stretch reads RTPCQQELDQ…APTIRGDPEC (83 aa). 3 cysteine pairs are disulfide-bonded: cysteine 218/cysteine 252, cysteine 263/cysteine 274, and cysteine 276/cysteine 297. Residues 292-294 carry the Cell attachment site motif; the sequence is RGD.

In terms of assembly, interacts with IGF1. Interacts with IGF2. Interacts (via RGD motif) with integrin alpha5/ITGA5; this interaction induces cell migration, adhesion or apoptosis according to the context. Interacts with PTPRB; this interaction leads to PTPRB dimerization and inactivation. Cleaved by MMP9 leading to release of free IGF2 from IGFBP2-IGF2 complex, which contributes to enhance the motility and the growth of astrocytes. Post-translationally, O-glycosylated.

It is found in the secreted. May have both growth-inhibiting and growth-promoting effects, depending on tissue type; increases IGF-induced DNA synthesis in the uterine epithelium. IGF-binding proteins prolong the half-life of the IGFs and have been shown to either inhibit or stimulate the growth promoting effects of the IGFs on cell culture. They alter the interaction of IGFs with their cell surface receptors. Its function is as follows. Multifunctional protein that plays a critical role in regulating the availability of IGFs such as IGF1 and IGF2 to their receptors and thereby regulates IGF-mediated cellular processes including proliferation, differentiation, and apoptosis in a cell-type specific manner. Functions coordinately with receptor protein tyrosine phosphatase beta/PTPRB and the IGF1 receptor to regulate IGF1-mediated signaling by stimulating the phosphorylation of PTEN leading to its inactivation and AKT1 activation. Plays a positive role in cell migration via interaction with integrin alpha5/ITGA5 through an RGD motif. Additionally, interaction with ITGA5/ITGB1 enhances the adhesion of endothelial progenitor cells to endothelial cells. Upon mitochondrial damage, facilitates apoptosis with ITGA5 of podocytes, and then activates the phosphorylation of focal adhesion kinase (FAK)-mediated mitochondrial injury. The protein is Insulin-like growth factor-binding protein 2 (IGFBP2) of Sus scrofa (Pig).